The sequence spans 170 residues: Small ribosomal subunit protein uS4 (170 aa).

An S4 RNA-binding domain is found at 100–164 (RRLQTVVYRE…SDLTDELHPA (65 aa)).

Belongs to the universal ribosomal protein uS4 family. In terms of assembly, part of the 30S ribosomal subunit. Contacts protein S5. The interaction surface between S4 and S5 is involved in control of translational fidelity.

In terms of biological role, one of the primary rRNA binding proteins, it binds directly to 16S rRNA where it nucleates assembly of the body of the 30S subunit. Its function is as follows. With S5 and S12 plays an important role in translational accuracy. In Halobacterium salinarum (strain ATCC 29341 / DSM 671 / R1), this protein is Small ribosomal subunit protein uS4.